We begin with the raw amino-acid sequence, 133 residues long: Small ribosomal subunit protein uS9 (133 aa).

The disordered stretch occupies residues 101 to 133; the sequence is MKPKGLLTRDPREVERKKYGLKKARRAPQFSKR. Over residues 107 to 118 the composition is skewed to basic and acidic residues; sequence LTRDPREVERKK. Basic residues predominate over residues 119 to 133; sequence YGLKKARRAPQFSKR.

The protein belongs to the universal ribosomal protein uS9 family.

This Deinococcus radiodurans (strain ATCC 13939 / DSM 20539 / JCM 16871 / CCUG 27074 / LMG 4051 / NBRC 15346 / NCIMB 9279 / VKM B-1422 / R1) protein is Small ribosomal subunit protein uS9.